A 189-amino-acid polypeptide reads, in one-letter code: Peptidyl-tRNA hydrolase (189 aa).

Residue tyrosine 14 participates in tRNA binding. The active-site Proton acceptor is the histidine 19. Residues tyrosine 64, asparagine 66, and asparagine 112 each coordinate tRNA.

Belongs to the PTH family. In terms of assembly, monomer.

The protein resides in the cytoplasm. The enzyme catalyses an N-acyl-L-alpha-aminoacyl-tRNA + H2O = an N-acyl-L-amino acid + a tRNA + H(+). Functionally, hydrolyzes ribosome-free peptidyl-tRNAs (with 1 or more amino acids incorporated), which drop off the ribosome during protein synthesis, or as a result of ribosome stalling. In terms of biological role, catalyzes the release of premature peptidyl moieties from peptidyl-tRNA molecules trapped in stalled 50S ribosomal subunits, and thus maintains levels of free tRNAs and 50S ribosomes. In Dehalococcoides mccartyi (strain CBDB1), this protein is Peptidyl-tRNA hydrolase.